The following is a 608-amino-acid chain: Serine/threonine-protein kinase ROP17 (608 aa).

Residues 1–21 (MELVLCFVIITISGVIRESSA) form the signal peptide. N-linked (GlcNAc...) asparagine glycosylation occurs at asparagine 76. In terms of domain architecture, Protein kinase spans 283–579 (LKKRGFLGGG…QQALEQFSLL (297 aa)). Residues 289–297 (LGGGGFGLV) and lysine 312 contribute to the ATP site. Aspartate 436 functions as the Proton acceptor in the catalytic mechanism.

The protein belongs to the protein kinase superfamily. Ser/Thr protein kinase family. In terms of assembly, interacts with ROP5; interaction with ROP5 does not affect kinase activity. Interacts with human BCL2; the interaction probably promotes BCL2 phosphorylation and degradation.

It localises to the secreted. It is found in the cytoplasmic vesicle. Its subcellular location is the secretory vesicle. The protein resides in the rhoptry. The protein localises to the parasitophorous vacuole membrane. It carries out the reaction L-threonyl-[protein] + ATP = O-phospho-L-threonyl-[protein] + ADP + H(+). It catalyses the reaction L-seryl-[protein] + ATP = O-phospho-L-seryl-[protein] + ADP + H(+). In terms of biological role, protein kinase. Virulence factor. Promotes migration of Toxoplasma-infected macrophages through collagen matrix, facilitating parasite transport through tissues and systemic dissemination. Plays a role in the translocation of dense granule effectors, such as GRA16 and GRA24, across the parasitophorous vacuole membrane in Toxoplasma-infected host cells. Phosphorylates mouse IRGB6 (TGTP1/TGTP2), an immunity-related GTPase (IRG) that protects mice from infection by certain intracellular pathogens; the phosphorylation leads to the disassembly of IRGB6 polymers into monomers and dimers. May modulate gene expression in human cells. Promotes autophagy in human cells via modulation of the BCL2-BECN1 pathway. In Toxoplasma gondii, this protein is Serine/threonine-protein kinase ROP17.